The primary structure comprises 261 residues: Lys-63-specific deubiquitinase BRCC36 (261 aa).

The region spanning 6-149 (VHIQGDAFLV…YTCFQSVQAQ (144 aa)) is the MPN domain. 3 residues coordinate Zn(2+): His92, His94, and Asp105. A JAMM motif motif is present at residues 92-105 (HSHPHITVWPSHVD).

This sequence belongs to the peptidase M67A family. BRCC36 subfamily. As to quaternary structure, component of the BRCA1-A complex, at least composed of brca1, bard1, uimc1/rap80, abraxas1, brcc3/brcc36, babam2 and babam1/nba1. In the BRCA1-A complex, interacts directly with ABRAXAS1 and babam2. Component of the BRISC complex, at least composed of ABRAXAS2, brcc3/brcc36, babam2 and babam1/nba1. Within the complex, interacts directly with abraxas2. Both the BRCA1-A complex and the BRISC complex bind polyubiquitin. Zn(2+) serves as cofactor.

It localises to the nucleus. The protein localises to the cytoplasm. Its subcellular location is the cytoskeleton. It is found in the spindle pole. Functionally, metalloprotease that specifically cleaves 'Lys-63'-linked polyubiquitin chains. Does not have activity toward 'Lys-48'-linked polyubiquitin chains. Component of the BRCA1-A complex, a complex that specifically recognizes 'Lys-63'-linked ubiquitinated histones H2A and H2AX at DNA lesions sites, leading to target the brca1-bard1 heterodimer to sites of DNA damage at double-strand breaks (DSBs). In the BRCA1-A complex, it specifically removes 'Lys-63'-linked ubiquitin on histones H2A and H2AX, antagonizing the rnf8-dependent ubiquitination at double-strand breaks (DSBs). Catalytic subunit of the BRISC complex, a multiprotein complex that specifically cleaves 'Lys-63'-linked ubiquitin in various substrates. Mediates the specific 'Lys-63'-specific deubiquitination associated with the COP9 signalosome complex (CSN), via the interaction of the BRISC complex with the CSN complex. The BRISC complex is required for normal mitotic spindle assembly and microtubule attachment to kinetochores via its role in deubiquitinating numa1. Plays a role in interferon signaling via its role in the deubiquitination of the interferon receptor ifnar1; deubiquitination increases ifnar1 activity by enhancing its stability and cell surface expression. Acts as a regulator of the NLRP3 inflammasome by mediating deubiquitination of nlrp3. Down-regulates the response to bacterial lipopolysaccharide (LPS) via its role in ifnar1 deubiquitination. The sequence is that of Lys-63-specific deubiquitinase BRCC36 (brcc3) from Xenopus laevis (African clawed frog).